Reading from the N-terminus, the 502-residue chain is Probable cytosol aminopeptidase (502 aa).

Mn(2+) contacts are provided by K270 and D275. Residue K282 is part of the active site. Residues D293, D352, and E354 each contribute to the Mn(2+) site. R356 is a catalytic residue.

The protein belongs to the peptidase M17 family. Requires Mn(2+) as cofactor.

The protein localises to the cytoplasm. It catalyses the reaction Release of an N-terminal amino acid, Xaa-|-Yaa-, in which Xaa is preferably Leu, but may be other amino acids including Pro although not Arg or Lys, and Yaa may be Pro. Amino acid amides and methyl esters are also readily hydrolyzed, but rates on arylamides are exceedingly low.. The catalysed reaction is Release of an N-terminal amino acid, preferentially leucine, but not glutamic or aspartic acids.. Functionally, presumably involved in the processing and regular turnover of intracellular proteins. Catalyzes the removal of unsubstituted N-terminal amino acids from various peptides. This chain is Probable cytosol aminopeptidase, found in Desulfotalea psychrophila (strain LSv54 / DSM 12343).